Here is a 352-residue protein sequence, read N- to C-terminus: D-alanine--D-alanine ligase (352 aa).

The ATP-grasp domain occupies 133 to 342 (KTVFAAAGLP…FPKLVDRLIQ (210 aa)). 169–224 (DETIGYPNFVKPANLGSSVGISKVRSRLELEAALDSAASFDRRIVVEAGVVAREVE) is an ATP binding site. Positions 295, 309, and 311 each coordinate Mg(2+).

This sequence belongs to the D-alanine--D-alanine ligase family. Mg(2+) is required as a cofactor. Mn(2+) serves as cofactor.

Its subcellular location is the cytoplasm. It carries out the reaction 2 D-alanine + ATP = D-alanyl-D-alanine + ADP + phosphate + H(+). It functions in the pathway cell wall biogenesis; peptidoglycan biosynthesis. Functionally, cell wall formation. The protein is D-alanine--D-alanine ligase of Acaryochloris marina (strain MBIC 11017).